We begin with the raw amino-acid sequence, 609 residues long: Forkhead box protein O (609 aa).

Disordered stretches follow at residues 1–89 and 181–263; these read MDGF…KNSS and KSVR…SSCG. T43 is modified (phosphothreonine; by PKB/AKT1). The span at 62 to 79 shows a compositional bias: polar residues; it reads TKASNQQLASGDPQQAMQ. The segment covering 80 to 89 has biased composition (low complexity); the sequence is NANAAKKNSS. A DNA-binding region (fork-head) is located at residues 94–200; the sequence is WGNLSYADLI…ETSRYEKRRG (107 aa). S189 carries the post-translational modification Phosphoserine; by PKB/AKT1. Composition is skewed to polar residues over residues 220-229 and 254-263; these read ATPSPSSSVS and RASSNASSCG. S257 carries the post-translational modification Phosphoserine; by PKB/AKT1. Residues S260, S261, and S266 each carry the phosphoserine modification. Disordered regions lie at residues 321–365 and 384–411; these read AASG…QGQG and RDGL…DSLN. Residues 327–339 show a composition bias toward pro residues; that stretch reads TQPPPPYQPPQQP. Residues 388–397 are compositionally biased toward polar residues; it reads SPNSVTTTMS.

Interacts with melt.

Its subcellular location is the cytoplasm. It is found in the nucleus. Its function is as follows. Transcription factor involved in the regulation of the insulin signaling pathway. Consistently activates both the downstream target Thor\d4EBP and the feedback control target InR. Involved in negative regulation of the cell cycle, modulating cell growth and proliferation. In response to cellular stresses, such as nutrient deprivation or increased levels of reactive oxygen species, foxo is activated and inhibits growth through the action of target genes such as Thor. Foxo activated in the adult fat body can regulate lifespan in adults; an insulin peptide itself may function as one secondary messenger of insulin-regulated aging. Also regulates Lip4, homolog of human acid lipases, thereby acting as a key modulator of lipid metabolism by insulin signaling and integrates insulin responses to glucose and lipid homeostasis. In Drosophila virilis (Fruit fly), this protein is Forkhead box protein O.